A 484-amino-acid polypeptide reads, in one-letter code: Putative cysteine ligase BshC (484 aa).

Positions 372–435 (RAFRDRVEGL…AARDEVLARH (64 aa)) form a coiled coil.

It belongs to the BshC family.

The chain is Putative cysteine ligase BshC from Thermus thermophilus (strain ATCC BAA-163 / DSM 7039 / HB27).